The following is a 494-amino-acid chain: UPF0371 protein SPCG_0344 (494 aa).

It belongs to the UPF0371 family.

This Streptococcus pneumoniae (strain CGSP14) protein is UPF0371 protein SPCG_0344.